We begin with the raw amino-acid sequence, 622 residues long: Threonine--tRNA ligase (622 aa).

The segment at 1–141 (MKTLLIHSDY…SRKITTERKE (141 aa)) is editing domain. Residues 199–498 (PHVKYIKEKE…TLENRPPALP (300 aa)) form a catalytic region. Positions 291, 343, and 467 each coordinate Zn(2+).

It belongs to the class-II aminoacyl-tRNA synthetase family. Homodimer. Requires Zn(2+) as cofactor.

The protein resides in the cytoplasm. It catalyses the reaction tRNA(Thr) + L-threonine + ATP = L-threonyl-tRNA(Thr) + AMP + diphosphate + H(+). Functionally, catalyzes the attachment of threonine to tRNA(Thr) in a two-step reaction: L-threonine is first activated by ATP to form Thr-AMP and then transferred to the acceptor end of tRNA(Thr). Also edits incorrectly charged L-seryl-tRNA(Thr). The chain is Threonine--tRNA ligase from Methanococcus maripaludis (strain C6 / ATCC BAA-1332).